Here is a 151-residue protein sequence, read N- to C-terminus: UPF0178 protein Ping_0754 (151 aa).

It belongs to the UPF0178 family.

In Psychromonas ingrahamii (strain DSM 17664 / CCUG 51855 / 37), this protein is UPF0178 protein Ping_0754.